Reading from the N-terminus, the 86-residue chain is ICP47 protein (86 aa).

The segment at 2 to 35 (SWALKTTDMFLDSSRCTHRTYGDVCAEIHKRERE) is active domain. Residues 33–86 (EREDREAARTAVTDPELPLLCPPDVRSDPASRNPTQQTRGCARSNERQDRVLAP) form a disordered region. Residues 62-71 (ASRNPTQQTR) are compositionally biased toward polar residues. The span at 76 to 86 (SNERQDRVLAP) shows a compositional bias: basic and acidic residues.

The protein belongs to the herpesviridae US12 family. Interacts with host TAP1 and TAP2; these interactions inhibit the loading of peptides onto MHC class I molecules.

It is found in the host cytoplasm. The protein resides in the host nucleus. In terms of biological role, plays a role in the inhibition of host immune response. Binds specifically to transporters associated with antigen processing (TAP), thereby blocking peptide-binding and translocation by TAP as well as subsequent loading of peptides onto MHC class I molecules. Empty MHC I molecules are retained in the endoplasmic reticulum and ultimately directed to proteasomal degradation. In consequence, infected cells are masked for immune recognition by cytotoxic T-lymphocytes. The protein is ICP47 protein (US12) of Human herpesvirus 2 (strain HG52) (HHV-2).